A 425-amino-acid chain; its full sequence is Formyl-CoA:oxalate CoA-transferase (425 aa).

CoA contacts are provided by residues 17 to 18, Arg-38, 72 to 75, 96 to 98, Arg-104, and 136 to 139; these read QS, LDTK, NFG, and KVYE. The Nucleophile role is filled by Asp-168. 247–249 provides a ligand contact to substrate; the sequence is GGQ.

This sequence belongs to the CoA-transferase III family. Frc subfamily. In terms of assembly, homodimer.

It carries out the reaction formyl-CoA + oxalate = oxalyl-CoA + formate. The protein operates within metabolic intermediate degradation; oxalate degradation; CO(2) and formate from oxalate: step 1/2. Functionally, involved in the catabolism of oxalate and in the adapatation to low pH via the induction of the oxalate-dependent acid tolerance response (ATR). Catalyzes the transfer of the CoA moiety from formyl-CoA to oxalate. This is Formyl-CoA:oxalate CoA-transferase from Rhodopseudomonas palustris (strain ATCC BAA-98 / CGA009).